Consider the following 931-residue polypeptide: Phosphoenolpyruvate carboxylase (931 aa).

Residues His-138 and Lys-594 contribute to the active site.

The protein belongs to the PEPCase type 1 family. The cofactor is Mg(2+).

The enzyme catalyses oxaloacetate + phosphate = phosphoenolpyruvate + hydrogencarbonate. Its function is as follows. Forms oxaloacetate, a four-carbon dicarboxylic acid source for the tricarboxylic acid cycle. The sequence is that of Phosphoenolpyruvate carboxylase from Streptococcus agalactiae serotype III (strain NEM316).